Here is a 245-residue protein sequence, read N- to C-terminus: tRNA1(Val) (adenine(37)-N6)-methyltransferase (245 aa).

Belongs to the methyltransferase superfamily. tRNA (adenine-N(6)-)-methyltransferase family.

It is found in the cytoplasm. It catalyses the reaction adenosine(37) in tRNA1(Val) + S-adenosyl-L-methionine = N(6)-methyladenosine(37) in tRNA1(Val) + S-adenosyl-L-homocysteine + H(+). Functionally, specifically methylates the adenine in position 37 of tRNA(1)(Val) (anticodon cmo5UAC). The polypeptide is tRNA1(Val) (adenine(37)-N6)-methyltransferase (Escherichia coli O7:K1 (strain IAI39 / ExPEC)).